We begin with the raw amino-acid sequence, 446 residues long: UDP-N-acetylmuramoylalanine--D-glutamate ligase (446 aa).

118–124 serves as a coordination point for ATP; the sequence is GSNGKST.

Belongs to the MurCDEF family.

It localises to the cytoplasm. It carries out the reaction UDP-N-acetyl-alpha-D-muramoyl-L-alanine + D-glutamate + ATP = UDP-N-acetyl-alpha-D-muramoyl-L-alanyl-D-glutamate + ADP + phosphate + H(+). It functions in the pathway cell wall biogenesis; peptidoglycan biosynthesis. Cell wall formation. Catalyzes the addition of glutamate to the nucleotide precursor UDP-N-acetylmuramoyl-L-alanine (UMA). The sequence is that of UDP-N-acetylmuramoylalanine--D-glutamate ligase from Pseudoalteromonas translucida (strain TAC 125).